A 298-amino-acid chain; its full sequence is Probable endonuclease 4 (298 aa).

His-69, His-111, Glu-146, Asp-180, His-183, His-215, Asp-228, His-230, and Glu-260 together coordinate Zn(2+).

It belongs to the AP endonuclease 2 family. Zn(2+) is required as a cofactor.

The enzyme catalyses Endonucleolytic cleavage to 5'-phosphooligonucleotide end-products.. Its function is as follows. Endonuclease IV plays a role in DNA repair. It cleaves phosphodiester bonds at apurinic or apyrimidinic (AP) sites, generating a 3'-hydroxyl group and a 5'-terminal sugar phosphate. The protein is Probable endonuclease 4 of Bacillus mycoides (strain KBAB4) (Bacillus weihenstephanensis).